Reading from the N-terminus, the 194-residue chain is Ion-translocating oxidoreductase complex subunit A (194 aa).

Transmembrane regions (helical) follow at residues 4–24 (LVLI…QFLG), 39–59 (IGLA…SYLL), 72–92 (LRTI…EMLV), 102–122 (VLGI…VALL), 135–155 (GING…FAAM), and 172–192 (AIGL…SGLI).

It belongs to the NqrDE/RnfAE family. The complex is composed of six subunits: RnfA, RnfB, RnfC, RnfD, RnfE and RnfG.

Its subcellular location is the cell inner membrane. In terms of biological role, part of a membrane-bound complex that couples electron transfer with translocation of ions across the membrane. In Azotobacter vinelandii (strain DJ / ATCC BAA-1303), this protein is Ion-translocating oxidoreductase complex subunit A.